A 521-amino-acid polypeptide reads, in one-letter code: UDP-N-acetylmuramoyl-L-alanyl-D-glutamate--2,6-diaminopimelate ligase (521 aa).

Residue Ser-33 participates in UDP-N-acetyl-alpha-D-muramoyl-L-alanyl-D-glutamate binding. An ATP-binding site is contributed by 116-122 (GTNGKTT). UDP-N-acetyl-alpha-D-muramoyl-L-alanyl-D-glutamate-binding positions include 158–159 (TT), Ser-185, Gln-191, and Arg-193. N6-carboxylysine is present on Lys-225. Meso-2,6-diaminopimelate-binding positions include Arg-409, 433 to 436 (DNPR), Gly-483, and Glu-487. The Meso-diaminopimelate recognition motif signature appears at 433–436 (DNPR).

It belongs to the MurCDEF family. MurE subfamily. Mg(2+) is required as a cofactor. Carboxylation is probably crucial for Mg(2+) binding and, consequently, for the gamma-phosphate positioning of ATP.

It is found in the cytoplasm. It carries out the reaction UDP-N-acetyl-alpha-D-muramoyl-L-alanyl-D-glutamate + meso-2,6-diaminopimelate + ATP = UDP-N-acetyl-alpha-D-muramoyl-L-alanyl-gamma-D-glutamyl-meso-2,6-diaminopimelate + ADP + phosphate + H(+). Its pathway is cell wall biogenesis; peptidoglycan biosynthesis. Functionally, catalyzes the addition of meso-diaminopimelic acid to the nucleotide precursor UDP-N-acetylmuramoyl-L-alanyl-D-glutamate (UMAG) in the biosynthesis of bacterial cell-wall peptidoglycan. This Nitrosomonas europaea (strain ATCC 19718 / CIP 103999 / KCTC 2705 / NBRC 14298) protein is UDP-N-acetylmuramoyl-L-alanyl-D-glutamate--2,6-diaminopimelate ligase.